The sequence spans 237 residues: Ras modification protein ERF4 (237 aa).

The protein belongs to the ERF4 family. In terms of assembly, interacts with ERF2.

It localises to the endoplasmic reticulum membrane. Its function is as follows. The ERF2-SHR5 complex is a palmitoyltransferase specific for Ras proteins. Palmitoylates RAS2, which is required for its proper plasma membrane localization. This is Ras modification protein ERF4 (SHR5) from Saccharomyces cerevisiae (strain ATCC 204508 / S288c) (Baker's yeast).